Here is a 38-residue protein sequence, read N- to C-terminus: Photosystem II reaction center protein L (38 aa).

The helical transmembrane segment at 17–37 threads the bilayer; sequence SLFWGLLLIFVLAVLFSSYFF.

The protein belongs to the PsbL family. As to quaternary structure, PSII is composed of 1 copy each of membrane proteins PsbA, PsbB, PsbC, PsbD, PsbE, PsbF, PsbH, PsbI, PsbJ, PsbK, PsbL, PsbM, PsbT, PsbX, PsbY, PsbZ, Psb30/Ycf12, at least 3 peripheral proteins of the oxygen-evolving complex and a large number of cofactors. It forms dimeric complexes.

It localises to the plastid. The protein resides in the chloroplast thylakoid membrane. Functionally, one of the components of the core complex of photosystem II (PSII). PSII is a light-driven water:plastoquinone oxidoreductase that uses light energy to abstract electrons from H(2)O, generating O(2) and a proton gradient subsequently used for ATP formation. It consists of a core antenna complex that captures photons, and an electron transfer chain that converts photonic excitation into a charge separation. This subunit is found at the monomer-monomer interface and is required for correct PSII assembly and/or dimerization. The polypeptide is Photosystem II reaction center protein L (Porphyra purpurea (Red seaweed)).